Here is a 167-residue protein sequence, read N- to C-terminus: NAD(P)H-quinone oxidoreductase subunit I, chloroplastic (167 aa).

2 4Fe-4S ferredoxin-type domains span residues 55–84 (GRIH…VDWK) and 95–124 (LNYS…MTEE). Cys64, Cys67, Cys70, Cys74, Cys104, Cys107, Cys110, and Cys114 together coordinate [4Fe-4S] cluster.

It belongs to the complex I 23 kDa subunit family. NDH is composed of at least 16 different subunits, 5 of which are encoded in the nucleus. [4Fe-4S] cluster is required as a cofactor.

It localises to the plastid. The protein localises to the chloroplast thylakoid membrane. The enzyme catalyses a plastoquinone + NADH + (n+1) H(+)(in) = a plastoquinol + NAD(+) + n H(+)(out). The catalysed reaction is a plastoquinone + NADPH + (n+1) H(+)(in) = a plastoquinol + NADP(+) + n H(+)(out). In terms of biological role, NDH shuttles electrons from NAD(P)H:plastoquinone, via FMN and iron-sulfur (Fe-S) centers, to quinones in the photosynthetic chain and possibly in a chloroplast respiratory chain. The immediate electron acceptor for the enzyme in this species is believed to be plastoquinone. Couples the redox reaction to proton translocation, and thus conserves the redox energy in a proton gradient. This Panax ginseng (Korean ginseng) protein is NAD(P)H-quinone oxidoreductase subunit I, chloroplastic.